Consider the following 680-residue polypeptide: DNA ligase (680 aa).

Residues 38–42, 87–88, and glutamate 119 each bind NAD(+); these read DAEYD and SL. Lysine 121 acts as the N6-AMP-lysine intermediate in catalysis. 4 residues coordinate NAD(+): arginine 142, glutamate 179, lysine 296, and lysine 320. Zn(2+)-binding residues include cysteine 414, cysteine 417, cysteine 432, and cysteine 438. Residues 597–680 enclose the BRCT domain; it reads IEDLPLKGLT…DLLRKHGRLE (84 aa).

This sequence belongs to the NAD-dependent DNA ligase family. LigA subfamily. Mg(2+) is required as a cofactor. The cofactor is Mn(2+).

The enzyme catalyses NAD(+) + (deoxyribonucleotide)n-3'-hydroxyl + 5'-phospho-(deoxyribonucleotide)m = (deoxyribonucleotide)n+m + AMP + beta-nicotinamide D-nucleotide.. DNA ligase that catalyzes the formation of phosphodiester linkages between 5'-phosphoryl and 3'-hydroxyl groups in double-stranded DNA using NAD as a coenzyme and as the energy source for the reaction. It is essential for DNA replication and repair of damaged DNA. The polypeptide is DNA ligase (Cellvibrio japonicus (strain Ueda107) (Pseudomonas fluorescens subsp. cellulosa)).